Reading from the N-terminus, the 160-residue chain is Small ribosomal subunit protein uS7 (160 aa).

This sequence belongs to the universal ribosomal protein uS7 family. Part of the 30S ribosomal subunit. Contacts proteins S9 and S11.

Its function is as follows. One of the primary rRNA binding proteins, it binds directly to 16S rRNA where it nucleates assembly of the head domain of the 30S subunit. Is located at the subunit interface close to the decoding center, probably blocks exit of the E-site tRNA. The chain is Small ribosomal subunit protein uS7 from Hydrogenobaculum sp. (strain Y04AAS1).